We begin with the raw amino-acid sequence, 268 residues long: tRNA pseudouridine synthase A (268 aa).

The Nucleophile role is filled by Asp-52. Residue Tyr-110 participates in substrate binding.

This sequence belongs to the tRNA pseudouridine synthase TruA family. Homodimer.

The enzyme catalyses uridine(38/39/40) in tRNA = pseudouridine(38/39/40) in tRNA. Functionally, formation of pseudouridine at positions 38, 39 and 40 in the anticodon stem and loop of transfer RNAs. The chain is tRNA pseudouridine synthase A from Prochlorococcus marinus (strain AS9601).